The following is a 156-amino-acid chain: Protein-export protein SecB (156 aa).

The protein belongs to the SecB family. Homotetramer, a dimer of dimers. One homotetramer interacts with 1 SecA dimer.

It is found in the cytoplasm. One of the proteins required for the normal export of preproteins out of the cell cytoplasm. It is a molecular chaperone that binds to a subset of precursor proteins, maintaining them in a translocation-competent state. It also specifically binds to its receptor SecA. The protein is Protein-export protein SecB of Xanthobacter autotrophicus (strain ATCC BAA-1158 / Py2).